Consider the following 89-residue polypeptide: Small ribosomal subunit protein uS15 (89 aa).

It belongs to the universal ribosomal protein uS15 family. As to quaternary structure, part of the 30S ribosomal subunit. Forms a bridge to the 50S subunit in the 70S ribosome, contacting the 23S rRNA.

Functionally, one of the primary rRNA binding proteins, it binds directly to 16S rRNA where it helps nucleate assembly of the platform of the 30S subunit by binding and bridging several RNA helices of the 16S rRNA. Forms an intersubunit bridge (bridge B4) with the 23S rRNA of the 50S subunit in the ribosome. This chain is Small ribosomal subunit protein uS15, found in Latilactobacillus sakei subsp. sakei (strain 23K) (Lactobacillus sakei subsp. sakei).